A 364-amino-acid polypeptide reads, in one-letter code: Dihydroorotate dehydrogenase (quinone) (364 aa).

Residues 61–65 (AGFDK) and Thr85 contribute to the FMN site. Lys65 contributes to the substrate binding site. 110–114 (NRMGF) contributes to the substrate binding site. Positions 139 and 170 each coordinate FMN. Asn170 lines the substrate pocket. Ser173 (nucleophile) is an active-site residue. Asn175 is a binding site for substrate. FMN contacts are provided by Lys214 and Ala242. 243 to 244 (NT) contacts substrate. FMN-binding positions include Gly266, Gly295, and 316–317 (YS).

The protein belongs to the dihydroorotate dehydrogenase family. Type 2 subfamily. Monomer. FMN serves as cofactor.

Its subcellular location is the cell membrane. It carries out the reaction (S)-dihydroorotate + a quinone = orotate + a quinol. It functions in the pathway pyrimidine metabolism; UMP biosynthesis via de novo pathway; orotate from (S)-dihydroorotate (quinone route): step 1/1. In terms of biological role, catalyzes the conversion of dihydroorotate to orotate with quinone as electron acceptor. This Rhodopseudomonas palustris (strain ATCC BAA-98 / CGA009) protein is Dihydroorotate dehydrogenase (quinone).